The sequence spans 346 residues: Insertion element IS476 uncharacterized 39.2 kDa protein (346 aa).

The interval 1–50 (MVSARPAFISGGPSTGGWRPTRQAAERTGGPEHSIEEVAGRGAPGHRSAE) is disordered. Basic and acidic residues predominate over residues 29–39 (GGPEHSIEEVA). The 161-residue stretch at 169–329 (ASSMPNDTWS…IPPAQFAANY (161 aa)) folds into the Integrase catalytic domain.

This chain is Insertion element IS476 uncharacterized 39.2 kDa protein, found in Xanthomonas euvesicatoria.